Here is a 1102-residue protein sequence, read N- to C-terminus: Coiled-coil domain-containing protein AGAP005037 (1102 aa).

Residues 1–11 (MLIRWKSKDKS) are compositionally biased toward basic and acidic residues. Disordered stretches follow at residues 1-69 (MLIR…HTLG) and 295-318 (HKSKQPTKTPYYVGTTQTLPRGMY). Over residues 12 to 21 (SSSTSSSSST) the composition is skewed to low complexity. Residues 50–65 (IDDRRRSARSREDPRR) are compositionally biased toward basic and acidic residues. Positions 405-430 (HRIRVEHMERQLANLTGLVQKALTQN) form a coiled coil. Disordered regions lie at residues 450–475 (RNAEATGDGTVCTREKPPKLGKSTCH) and 489–539 (DIQG…PLVM). Coiled coils occupy residues 554–579 (EVYNQLRGLQKKAMDLRTEVRTLRRL) and 614–654 (DKER…EVIN). Disordered stretches follow at residues 745–774 (LPIPDTAGTDETIKPPETHNNVNKPIPSPR), 832–958 (TKIS…CSDN), and 1031–1087 (LCGG…TLPP). Residues 832–849 (TKISQSQLYPSEPVSSNV) are compositionally biased toward polar residues. The span at 867–881 (PPQPTRPTTGKPPVP) shows a compositional bias: pro residues. Low complexity predominate over residues 904–918 (TSSRSPLASPTSPHV). The span at 936–958 (DCEQQQRTSEGTDSGSESVCSDN) shows a compositional bias: polar residues.

The chain is Coiled-coil domain-containing protein AGAP005037 from Anopheles gambiae (African malaria mosquito).